A 171-amino-acid polypeptide reads, in one-letter code: Protein GrpE (171 aa).

A disordered region spans residues 1-22; it reads MNHEQPDIESQQSAADAAATAG.

This sequence belongs to the GrpE family. As to quaternary structure, homodimer.

Its subcellular location is the cytoplasm. Its function is as follows. Participates actively in the response to hyperosmotic and heat shock by preventing the aggregation of stress-denatured proteins, in association with DnaK and GrpE. It is the nucleotide exchange factor for DnaK and may function as a thermosensor. Unfolded proteins bind initially to DnaJ; upon interaction with the DnaJ-bound protein, DnaK hydrolyzes its bound ATP, resulting in the formation of a stable complex. GrpE releases ADP from DnaK; ATP binding to DnaK triggers the release of the substrate protein, thus completing the reaction cycle. Several rounds of ATP-dependent interactions between DnaJ, DnaK and GrpE are required for fully efficient folding. This Stenotrophomonas maltophilia (strain K279a) protein is Protein GrpE.